The following is a 390-amino-acid chain: MNKTNPTIALVAGEVSGDILGAGLIRQLKAHYPNARFIGIAGPRMLAEGCETLVDMEELSVMGLAEILKHLPRLLKIRKNVIQTMLQEKPDVYIGIDAPDFNLDVELKLKANGIKTIHYVSPSVWAWRQNRIHKIAKATHQVLAFLPFEKAFYDKFNVPCRFIGHTMADAIPLKPNRAEACQTLQIDPAQRYLAILVGSRGSEVEFLAEPFLKTALLLKEQFPDLQFLVPLVNEKRRIQFETIKAKITPNLDLHLIDGNARQAMIAADATLLASGTAALEAMLCKSPMVVGYRMKPLTYFLAKRLVKTDYISLPNLLANEMLVPEMIQEECTPELLAEKLSVYLSDDESAVKNRHVLIQHFTDLHQKIQCNADKQAAQAVIDLLEGKENV.

It belongs to the LpxB family.

It carries out the reaction a lipid X + a UDP-2-N,3-O-bis[(3R)-3-hydroxyacyl]-alpha-D-glucosamine = a lipid A disaccharide + UDP + H(+). The protein operates within bacterial outer membrane biogenesis; LPS lipid A biosynthesis. Its function is as follows. Condensation of UDP-2,3-diacylglucosamine and 2,3-diacylglucosamine-1-phosphate to form lipid A disaccharide, a precursor of lipid A, a phosphorylated glycolipid that anchors the lipopolysaccharide to the outer membrane of the cell. The polypeptide is Lipid-A-disaccharide synthase (lpxB) (Haemophilus influenzae (strain ATCC 51907 / DSM 11121 / KW20 / Rd)).